Reading from the N-terminus, the 205-residue chain is Imidazole glycerol phosphate synthase subunit HisH (205 aa).

The 205-residue stretch at 1–205 (MVGIVNYNIG…RILKNFCEIG (205 aa)) folds into the Glutamine amidotransferase type-1 domain. Cys-79 functions as the Nucleophile in the catalytic mechanism. Catalysis depends on residues His-186 and Glu-188.

As to quaternary structure, heterodimer of HisH and HisF.

It is found in the cytoplasm. The catalysed reaction is 5-[(5-phospho-1-deoxy-D-ribulos-1-ylimino)methylamino]-1-(5-phospho-beta-D-ribosyl)imidazole-4-carboxamide + L-glutamine = D-erythro-1-(imidazol-4-yl)glycerol 3-phosphate + 5-amino-1-(5-phospho-beta-D-ribosyl)imidazole-4-carboxamide + L-glutamate + H(+). It catalyses the reaction L-glutamine + H2O = L-glutamate + NH4(+). The protein operates within amino-acid biosynthesis; L-histidine biosynthesis; L-histidine from 5-phospho-alpha-D-ribose 1-diphosphate: step 5/9. Functionally, IGPS catalyzes the conversion of PRFAR and glutamine to IGP, AICAR and glutamate. The HisH subunit catalyzes the hydrolysis of glutamine to glutamate and ammonia as part of the synthesis of IGP and AICAR. The resulting ammonia molecule is channeled to the active site of HisF. In Wolinella succinogenes (strain ATCC 29543 / DSM 1740 / CCUG 13145 / JCM 31913 / LMG 7466 / NCTC 11488 / FDC 602W) (Vibrio succinogenes), this protein is Imidazole glycerol phosphate synthase subunit HisH.